Consider the following 383-residue polypeptide: Galactokinase (383 aa).

E34 to D37 lines the substrate pocket. ATP is bound at residue G124 to S130. Residues S130 and E162 each contribute to the Mg(2+) site. Residue D174 is the Proton acceptor of the active site. Position 223 (Y223) interacts with substrate.

It belongs to the GHMP kinase family. GalK subfamily.

It localises to the cytoplasm. The enzyme catalyses alpha-D-galactose + ATP = alpha-D-galactose 1-phosphate + ADP + H(+). It functions in the pathway carbohydrate metabolism; galactose metabolism. Catalyzes the transfer of the gamma-phosphate of ATP to D-galactose to form alpha-D-galactose-1-phosphate (Gal-1-P). The chain is Galactokinase from Yersinia enterocolitica serotype O:8 / biotype 1B (strain NCTC 13174 / 8081).